Consider the following 1118-residue polypeptide: Receptor-type guanylate cyclase gcy-2 (1118 aa).

Positions 1-21 (MVSSILKFVILIHSTFHSTFA) are cleaved as a signal peptide. Residues 22–494 (QNLPDTTVAP…FCPISFWEQY (473 aa)) are Extracellular-facing. Residues Asn-222, Asn-351, Asn-361, Asn-387, Asn-420, and Asn-452 are each glycosylated (N-linked (GlcNAc...) asparagine). The chain crosses the membrane as a helical span at residues 495–515 (MILAIVSISVIVLMVIIMIIG). The Cytoplasmic portion of the chain corresponds to 516 to 1118 (CLCVISAKHA…FKMDTLKVAN (603 aa)). Residues 558 to 875 (LQSAPSISTG…EGFDSVTVFF (318 aa)) form the Protein kinase domain. Residues 872–1002 (TVFFSDVVKF…DTVNTASRME (131 aa)) enclose the Guanylate cyclase domain. Positions 1076–1103 (WITPPAPKPEIRSVSSHGSRPPSVYDPL) are disordered.

It belongs to the adenylyl cyclase class-4/guanylyl cyclase family. Expressed bilaterally in AWA and ASI sensory neurons and in RIA and PVT interneurons.

The protein localises to the cell membrane. The enzyme catalyses GTP = 3',5'-cyclic GMP + diphosphate. In terms of biological role, guanylate cyclase involved in the production of the second messenger cGMP. This Caenorhabditis elegans protein is Receptor-type guanylate cyclase gcy-2.